A 232-amino-acid polypeptide reads, in one-letter code: Thiamine import ATP-binding protein ThiQ (232 aa).

Positions 2–230 constitute an ABC transporter domain; the sequence is LKLTDITWLY…KASASAILGI (229 aa). Residue 32–39 coordinates ATP; sequence GPSGAGKS.

It belongs to the ABC transporter superfamily. Thiamine importer (TC 3.A.1.19.1) family. The complex is composed of two ATP-binding proteins (ThiQ), two transmembrane proteins (ThiP) and a solute-binding protein (ThiB).

It is found in the cell inner membrane. It carries out the reaction thiamine(out) + ATP + H2O = thiamine(in) + ADP + phosphate + H(+). Its function is as follows. Part of the ABC transporter complex ThiBPQ involved in thiamine import. Responsible for energy coupling to the transport system. The sequence is that of Thiamine import ATP-binding protein ThiQ from Shigella boydii serotype 4 (strain Sb227).